Reading from the N-terminus, the 225-residue chain is 7-cyano-7-deazaguanine synthase (225 aa).

10-20 (LSGGIDSATAA) is an ATP binding site. The Zn(2+) site is built by Cys191, Cys199, Cys202, and Cys205.

The protein belongs to the QueC family. It depends on Zn(2+) as a cofactor.

The enzyme catalyses 7-carboxy-7-deazaguanine + NH4(+) + ATP = 7-cyano-7-deazaguanine + ADP + phosphate + H2O + H(+). It functions in the pathway purine metabolism; 7-cyano-7-deazaguanine biosynthesis. Catalyzes the ATP-dependent conversion of 7-carboxy-7-deazaguanine (CDG) to 7-cyano-7-deazaguanine (preQ(0)). The polypeptide is 7-cyano-7-deazaguanine synthase (Prochlorococcus marinus (strain NATL1A)).